Consider the following 170-residue polypeptide: Adenine phosphoribosyltransferase (170 aa).

The protein belongs to the purine/pyrimidine phosphoribosyltransferase family. In terms of assembly, homodimer.

Its subcellular location is the cytoplasm. The enzyme catalyses AMP + diphosphate = 5-phospho-alpha-D-ribose 1-diphosphate + adenine. It participates in purine metabolism; AMP biosynthesis via salvage pathway; AMP from adenine: step 1/1. Functionally, catalyzes a salvage reaction resulting in the formation of AMP, that is energically less costly than de novo synthesis. This chain is Adenine phosphoribosyltransferase, found in Lysinibacillus sphaericus (strain C3-41).